The primary structure comprises 137 residues: Large ribosomal subunit protein uL16 (137 aa).

It belongs to the universal ribosomal protein uL16 family. In terms of assembly, part of the 50S ribosomal subunit.

In terms of biological role, binds 23S rRNA and is also seen to make contacts with the A and possibly P site tRNAs. The chain is Large ribosomal subunit protein uL16 from Streptococcus uberis (strain ATCC BAA-854 / 0140J).